The primary structure comprises 245 residues: 1-(5-phosphoribosyl)-5-[(5-phosphoribosylamino)methylideneamino] imidazole-4-carboxamide isomerase (245 aa).

The Proton acceptor role is filled by D7. D129 serves as the catalytic Proton donor.

Belongs to the HisA/HisF family.

The protein resides in the cytoplasm. It carries out the reaction 1-(5-phospho-beta-D-ribosyl)-5-[(5-phospho-beta-D-ribosylamino)methylideneamino]imidazole-4-carboxamide = 5-[(5-phospho-1-deoxy-D-ribulos-1-ylimino)methylamino]-1-(5-phospho-beta-D-ribosyl)imidazole-4-carboxamide. It participates in amino-acid biosynthesis; L-histidine biosynthesis; L-histidine from 5-phospho-alpha-D-ribose 1-diphosphate: step 4/9. The protein is 1-(5-phosphoribosyl)-5-[(5-phosphoribosylamino)methylideneamino] imidazole-4-carboxamide isomerase of Aliivibrio fischeri (strain ATCC 700601 / ES114) (Vibrio fischeri).